The primary structure comprises 1004 residues: 2-oxoglutarate dehydrogenase E1 component (1004 aa).

The protein belongs to the alpha-ketoglutarate dehydrogenase family. Homodimer. Part of the 2-oxoglutarate dehydrogenase (OGDH) complex composed of E1 (2-oxoglutarate dehydrogenase), E2 (dihydrolipoamide succinyltransferase) and E3 (dihydrolipoamide dehydrogenase); the complex contains multiple copies of the three enzymatic components (E1, E2 and E3). Requires thiamine diphosphate as cofactor.

It catalyses the reaction N(6)-[(R)-lipoyl]-L-lysyl-[protein] + 2-oxoglutarate + H(+) = N(6)-[(R)-S(8)-succinyldihydrolipoyl]-L-lysyl-[protein] + CO2. E1 component of the 2-oxoglutarate dehydrogenase (OGDH) complex which catalyzes the decarboxylation of 2-oxoglutarate, the first step in the conversion of 2-oxoglutarate to succinyl-CoA and CO(2). In Brucella abortus (strain S19), this protein is 2-oxoglutarate dehydrogenase E1 component.